The sequence spans 305 residues: Ribonuclease BN (305 aa).

Residues His64, His66, Asp68, His69, His141, Asp212, and His270 each contribute to the Zn(2+) site. The active-site Proton acceptor is the Asp68.

This sequence belongs to the RNase Z family. RNase BN subfamily. Homodimer. It depends on Zn(2+) as a cofactor.

In terms of biological role, zinc phosphodiesterase, which has both exoribonuclease and endoribonuclease activities. The protein is Ribonuclease BN of Salmonella gallinarum (strain 287/91 / NCTC 13346).